Here is a 212-residue protein sequence, read N- to C-terminus: ATP phosphoribosyltransferase 2 (212 aa).

It belongs to the ATP phosphoribosyltransferase family. Short subfamily. In terms of assembly, heteromultimer composed of HisG and HisZ subunits.

It is found in the cytoplasm. The enzyme catalyses 1-(5-phospho-beta-D-ribosyl)-ATP + diphosphate = 5-phospho-alpha-D-ribose 1-diphosphate + ATP. It functions in the pathway amino-acid biosynthesis; L-histidine biosynthesis; L-histidine from 5-phospho-alpha-D-ribose 1-diphosphate: step 1/9. Its function is as follows. Catalyzes the condensation of ATP and 5-phosphoribose 1-diphosphate to form N'-(5'-phosphoribosyl)-ATP (PR-ATP). Has a crucial role in the pathway because the rate of histidine biosynthesis seems to be controlled primarily by regulation of HisG enzymatic activity. The sequence is that of ATP phosphoribosyltransferase 2 (hisG2) from Geobacter sulfurreducens (strain ATCC 51573 / DSM 12127 / PCA).